The sequence spans 105 residues: DNA-directed RNA polymerase subunit omega (105 aa).

The protein belongs to the RNA polymerase subunit omega family. In terms of assembly, the RNAP catalytic core consists of 2 alpha, 1 beta, 1 beta' and 1 omega subunit. When a sigma factor is associated with the core the holoenzyme is formed, which can initiate transcription.

It catalyses the reaction RNA(n) + a ribonucleoside 5'-triphosphate = RNA(n+1) + diphosphate. Its function is as follows. Promotes RNA polymerase assembly. Latches the N- and C-terminal regions of the beta' subunit thereby facilitating its interaction with the beta and alpha subunits. In Streptococcus pyogenes serotype M12 (strain MGAS2096), this protein is DNA-directed RNA polymerase subunit omega.